A 308-amino-acid polypeptide reads, in one-letter code: Phenylcoumaran benzylic ether reductase Betv6 (308 aa).

NADP(+) is bound by residues Gly11–Gly17, Arg36, and Lys45. The active-site Proton acceptor is the Lys133. Residue Arg137 coordinates NADP(+).

It belongs to the NmrA-type oxidoreductase family. Isoflavone reductase subfamily.

The catalysed reaction is (-)-dehydrodiconiferyl alcohol + NADPH + H(+) = (S)-isodihydrodehydrodiconiferyl alcohol + NADP(+). The enzyme catalyses (+)-dehydrodiconiferyl alcohol + NADPH + H(+) = (R)-isodihydrodehydrodiconiferyl alcohol + NADP(+). Functionally, oxidoreductase involved in lignan biosynthesis. Catalyzes the NADPH-dependent reduction of phenylcoumaran benzylic ethers. Converts dehydrodiconiferyl alcohol (DDC) to isodihydrodehydrodiconiferyl alcohol (IDDDC). In Betula pendula (European white birch), this protein is Phenylcoumaran benzylic ether reductase Betv6.